A 460-amino-acid chain; its full sequence is Bifunctional protein GlmU (460 aa).

The tract at residues 1 to 229 (MTNYAIILAA…FNESLGVNDR (229 aa)) is pyrophosphorylase. UDP-N-acetyl-alpha-D-glucosamine is bound by residues 8–11 (LAAG), Lys-22, Gln-72, and 77–78 (GT). Position 102 (Asp-102) interacts with Mg(2+). 4 residues coordinate UDP-N-acetyl-alpha-D-glucosamine: Gly-139, Glu-154, Asn-169, and Asn-227. Asn-227 contacts Mg(2+). A linker region spans residues 230 to 250 (VALATAETVMRQRITQKHMVN). The N-acetyltransferase stretch occupies residues 251–460 (GVTFQNPETV…RLAHHPSRSK (210 aa)). Arg-332 and Lys-350 together coordinate UDP-N-acetyl-alpha-D-glucosamine. The Proton acceptor role is filled by His-362. UDP-N-acetyl-alpha-D-glucosamine contacts are provided by Tyr-365 and Asn-376. Residues Ala-379, 385 to 386 (NY), Ser-404, Ala-422, and Arg-439 contribute to the acetyl-CoA site.

It in the N-terminal section; belongs to the N-acetylglucosamine-1-phosphate uridyltransferase family. The protein in the C-terminal section; belongs to the transferase hexapeptide repeat family. As to quaternary structure, homotrimer. It depends on Mg(2+) as a cofactor.

The protein resides in the cytoplasm. The catalysed reaction is alpha-D-glucosamine 1-phosphate + acetyl-CoA = N-acetyl-alpha-D-glucosamine 1-phosphate + CoA + H(+). The enzyme catalyses N-acetyl-alpha-D-glucosamine 1-phosphate + UTP + H(+) = UDP-N-acetyl-alpha-D-glucosamine + diphosphate. It functions in the pathway nucleotide-sugar biosynthesis; UDP-N-acetyl-alpha-D-glucosamine biosynthesis; N-acetyl-alpha-D-glucosamine 1-phosphate from alpha-D-glucosamine 6-phosphate (route II): step 2/2. The protein operates within nucleotide-sugar biosynthesis; UDP-N-acetyl-alpha-D-glucosamine biosynthesis; UDP-N-acetyl-alpha-D-glucosamine from N-acetyl-alpha-D-glucosamine 1-phosphate: step 1/1. It participates in bacterial outer membrane biogenesis; LPS lipid A biosynthesis. Its function is as follows. Catalyzes the last two sequential reactions in the de novo biosynthetic pathway for UDP-N-acetylglucosamine (UDP-GlcNAc). The C-terminal domain catalyzes the transfer of acetyl group from acetyl coenzyme A to glucosamine-1-phosphate (GlcN-1-P) to produce N-acetylglucosamine-1-phosphate (GlcNAc-1-P), which is converted into UDP-GlcNAc by the transfer of uridine 5-monophosphate (from uridine 5-triphosphate), a reaction catalyzed by the N-terminal domain. This Streptococcus pyogenes serotype M5 (strain Manfredo) protein is Bifunctional protein GlmU.